A 249-amino-acid polypeptide reads, in one-letter code: ATP synthase subunit a (249 aa).

6 helical membrane passes run 29–49 (ASLF…FATS), 84–104 (FFPF…LGMF), 114–134 (IIVT…YGFY), 140–160 (FFGI…VASI), 193–213 (FVAS…LPLI), and 216–236 (VAMT…FAVL).

Belongs to the ATPase A chain family. F-type ATPases have 2 components, CF(1) - the catalytic core - and CF(0) - the membrane proton channel. CF(1) has five subunits: alpha(3), beta(3), gamma(1), delta(1), epsilon(1). CF(0) has three main subunits: a(1), b(2) and c(9-12). The alpha and beta chains form an alternating ring which encloses part of the gamma chain. CF(1) is attached to CF(0) by a central stalk formed by the gamma and epsilon chains, while a peripheral stalk is formed by the delta and b chains.

The protein localises to the cell inner membrane. Key component of the proton channel; it plays a direct role in the translocation of protons across the membrane. This Agrobacterium fabrum (strain C58 / ATCC 33970) (Agrobacterium tumefaciens (strain C58)) protein is ATP synthase subunit a.